A 69-amino-acid chain; its full sequence is Small, acid-soluble spore protein C1 (69 aa).

This sequence belongs to the alpha/beta-type SASP family.

Its function is as follows. SASP are bound to spore DNA. They are double-stranded DNA-binding proteins that cause DNA to change to an a-like conformation. They protect the DNA backbone from chemical and enzymatic cleavage and are thus involved in dormant spore's high resistance to UV light. This is Small, acid-soluble spore protein C1 (SASP-C1) from Priestia megaterium (Bacillus megaterium).